The following is a 180-amino-acid chain: Ribosome-recycling factor (180 aa).

It belongs to the RRF family.

Its subcellular location is the cytoplasm. Functionally, responsible for the release of ribosomes from messenger RNA at the termination of protein biosynthesis. May increase the efficiency of translation by recycling ribosomes from one round of translation to another. This is Ribosome-recycling factor from Chlamydia felis (strain Fe/C-56) (Chlamydophila felis).